Reading from the N-terminus, the 597-residue chain is DDB1- and CUL4-associated factor 8 (597 aa).

The span at 1–24 (MSSKGSSTDGRTDLANGSLSSSPE) shows a compositional bias: polar residues. Residues 1 to 147 (MSSKGSSTDG…DWVSSETSAL (147 aa)) are disordered. 2 positions are modified to phosphoserine: Ser21 and Ser22. The Nuclear export signal signature appears at 39–50 (IEVEASDLSLSL). The span at 65–99 (RGTDTESSGEDKDSDSMEDTGHYSINDENRVHDRS) shows a compositional bias: basic and acidic residues. The residue at position 99 (Ser99) is a Phosphoserine. Positions 100 to 112 (EEEEEEEEEEEEE) are enriched in acidic residues. Residues 114 to 122 (PRRRVQRKR) carry the Nuclear localization signal motif. The segment covering 124–137 (NRDQDSSDDERALE) has biased composition (basic and acidic residues). Residues Ser129 and Ser130 each carry the phosphoserine modification. 7 WD repeats span residues 191 to 230 (GHTG…PVLD), 234 to 275 (GHKS…CCKN), 281 to 321 (QHKG…PASK), 329 to 369 (EKKV…ENEN), 385 to 424 (ESKA…GAQY), 432 to 472 (RNNA…IIQF), and 476 to 515 (DKGG…STEL). At Arg204 the chain carries Omega-N-methylarginine; by PRMT1. A disordered region spans residues 558–597 (HRRWREPGVGATDADSDESPSSSDTSDEEEGPDRVQCMPS).

Belongs to the WD repeat DCAF8 family. In terms of assembly, interacts with DDB1, CUL4A and CUL4B. Interacts with KPNA1, KPNB1 and XPO1.

It is found in the nucleus. It localises to the cytoplasm. The protein operates within protein modification; protein ubiquitination. Functionally, may function as a substrate receptor for CUL4-DDB1 E3 ubiquitin-protein ligase complex. The sequence is that of DDB1- and CUL4-associated factor 8 (DCAF8) from Homo sapiens (Human).